Here is a 304-residue protein sequence, read N- to C-terminus: MIKQRTLKNVIRATGVGLHTGEKVYLTLRPAAPNSGIKFRRVDLAEPVVIDARPDNVGDTTLSTTLVKGDVRISTVEHLLSAFAGLGIDNAYVDVSAPEVPIMDGSAGPFVFLIQSAGVQEQEAPKQFIRIKRPLQVEDGDKWARFEPHDGFKVTFTIDFDHPVFDKNSQTASIEFSSTSFVKEIARARTFGFMRDIEMLRKNRLALGGSMDNAIVVDKFRVLNEDGLRSGDEFVKHKILDAIGDLYLLGHSLIGSFTGYKSGHGLNNHLLCELLKARDAWEMVSFEDEGYAPISYMRTAPAGR.

The Zn(2+) site is built by H78, H237, and D241. Catalysis depends on H264, which acts as the Proton donor.

This sequence belongs to the LpxC family. Zn(2+) is required as a cofactor.

The catalysed reaction is a UDP-3-O-[(3R)-3-hydroxyacyl]-N-acetyl-alpha-D-glucosamine + H2O = a UDP-3-O-[(3R)-3-hydroxyacyl]-alpha-D-glucosamine + acetate. Its pathway is glycolipid biosynthesis; lipid IV(A) biosynthesis; lipid IV(A) from (3R)-3-hydroxytetradecanoyl-[acyl-carrier-protein] and UDP-N-acetyl-alpha-D-glucosamine: step 2/6. Functionally, catalyzes the hydrolysis of UDP-3-O-myristoyl-N-acetylglucosamine to form UDP-3-O-myristoylglucosamine and acetate, the committed step in lipid A biosynthesis. The protein is UDP-3-O-acyl-N-acetylglucosamine deacetylase of Methylococcus capsulatus (strain ATCC 33009 / NCIMB 11132 / Bath).